Reading from the N-terminus, the 859-residue chain is Homeobox-leucine zipper protein HOX32 (859 aa).

Residues 7–31 (AAVHGVGRQDRSSPGGGGAPQVDTG) form a disordered region. Residues 29–92 (DTGKYVRYTP…NRRCREKQRK (64 aa)) constitute a DNA-binding region (homeobox). Residues 100-129 (VNRKLTAMNKLLMEENDRLQKQVSRLVYEN) are a coiled coil. Polar residues predominate over residues 146–164 (TSCESVVTSGQHHQQQNPA). Positions 146–172 (TSCESVVTSGQHHQQQNPAATRPQRDA) are disordered. Residues 171–393 (DANNPAGLLA…LRHIRQIAHE (223 aa)) form the START domain.

Belongs to the HD-ZIP homeobox family. Class III subfamily. Expressed in seedlings, roots, stems, leaf sheaths and blades and panicles.

Its subcellular location is the nucleus. Its function is as follows. Probable transcription factor. The protein is Homeobox-leucine zipper protein HOX32 (HOX32) of Oryza sativa subsp. indica (Rice).